The chain runs to 545 residues: Inosine-5'-monophosphate dehydrogenase (545 aa).

CBS domains follow at residues Met138–Thr194 and Met201–Thr258. NAD(+) is bound by residues Asp295 and Gly347 to Gly349. 2 residues coordinate K(+): Gly349 and Gly351. Position 352 (Ser352) interacts with IMP. Cys354 is a binding site for K(+). Cys354 serves as the catalytic Thioimidate intermediate. IMP is bound by residues Asp387–Gly389, Gly410–Gly411, and Tyr434–Gly438. Arg455 (proton acceptor) is an active-site residue. Residue Glu470 participates in IMP binding. Positions 524, 525, and 526 each coordinate K(+).

Belongs to the IMPDH/GMPR family. Homotetramer. K(+) serves as cofactor.

It carries out the reaction IMP + NAD(+) + H2O = XMP + NADH + H(+). It functions in the pathway purine metabolism; XMP biosynthesis via de novo pathway; XMP from IMP: step 1/1. Its activity is regulated as follows. Mycophenolic acid (MPA) is a non-competitive inhibitor that prevents formation of the closed enzyme conformation by binding to the same site as the amobile flap. In contrast, mizoribine monophosphate (MZP) is a competitive inhibitor that induces the closed conformation. MPA is a potent inhibitor of mammalian IMPDHs but a poor inhibitor of the bacterial enzymes. MZP is a more potent inhibitor of bacterial IMPDH. Its function is as follows. Catalyzes the conversion of inosine 5'-phosphate (IMP) to xanthosine 5'-phosphate (XMP), the first committed and rate-limiting step in the de novo synthesis of guanine nucleotides, and therefore plays an important role in the regulation of cell growth. This is Inosine-5'-monophosphate dehydrogenase from Bifidobacterium longum (strain NCC 2705).